The sequence spans 582 residues: Poly(A) RNA polymerase, mitochondrial (582 aa).

The N-terminal 37 residues, 1–37 (MAVPGVGLLTRLNLCARRRTRVQRPIVRLLSCPGTVA), are a transit peptide targeting the mitochondrion. N6-acetyllysine is present on K90. ATP contacts are provided by residues 107-109 (YES) and 241-242 (GC). Mg(2+)-binding residues include D243 and D245. The region spanning 437 to 483 (LELLLKEFFEYFGNFAFDKNSINIRQGREQNKPDSSPLYIQNPFETS) is the PAP-associated domain.

Belongs to the DNA polymerase type-B-like family. In terms of assembly, homodimer. Requires Mg(2+) as cofactor. The cofactor is Mn(2+). As to expression, ubiquitous, with stronger expression in tissues with high energy requirements: heart, brain, and skeletal muscle.

The protein localises to the cytoplasm. It is found in the mitochondrion. The catalysed reaction is RNA(n) + ATP = RNA(n)-3'-adenine ribonucleotide + diphosphate. Functionally, polymerase that creates the 3' poly(A) tail of mitochondrial transcripts. Can use all four nucleotides, but has higher activity with ATP and UTP (in vitro). Plays a role in replication-dependent histone mRNA degradation. May be involved in the terminal uridylation of mature histone mRNAs before their degradation is initiated. Might be responsible for the creation of some UAA stop codons which are not encoded in mtDNA. In Homo sapiens (Human), this protein is Poly(A) RNA polymerase, mitochondrial (MTPAP).